A 479-amino-acid polypeptide reads, in one-letter code: Sucrose-6-phosphate hydrolase (479 aa).

A disordered region spans residues 1–28; that stretch reads MTAHDQELRRRAYEEVEKKEPIANSDPH. Residues 40 to 43, Gln59, 102 to 103, 161 to 162, and Glu220 contribute to the substrate site; these read LLND, YS, and RD. The active site involves Asp43.

This sequence belongs to the glycosyl hydrolase 32 family.

The enzyme catalyses Hydrolysis of terminal non-reducing beta-D-fructofuranoside residues in beta-D-fructofuranosides.. It functions in the pathway glycan biosynthesis; sucrose metabolism. The chain is Sucrose-6-phosphate hydrolase (sacA) from Bacillus subtilis (strain 168).